The sequence spans 412 residues: Gamma-glutamyl phosphate reductase (412 aa).

It belongs to the gamma-glutamyl phosphate reductase family.

The protein resides in the cytoplasm. It carries out the reaction L-glutamate 5-semialdehyde + phosphate + NADP(+) = L-glutamyl 5-phosphate + NADPH + H(+). It functions in the pathway amino-acid biosynthesis; L-proline biosynthesis; L-glutamate 5-semialdehyde from L-glutamate: step 2/2. In terms of biological role, catalyzes the NADPH-dependent reduction of L-glutamate 5-phosphate into L-glutamate 5-semialdehyde and phosphate. The product spontaneously undergoes cyclization to form 1-pyrroline-5-carboxylate. This is Gamma-glutamyl phosphate reductase from Bartonella henselae (strain ATCC 49882 / DSM 28221 / CCUG 30454 / Houston 1) (Rochalimaea henselae).